The following is a 356-amino-acid chain: Glycerol-3-phosphate dehydrogenase [NAD(P)+] (356 aa).

Residues Trp-12, Arg-32, Arg-33, and Lys-117 each contribute to the NADPH site. The sn-glycerol 3-phosphate site is built by Lys-117, Gly-151, and Ser-153. Residue Ala-155 coordinates NADPH. The sn-glycerol 3-phosphate site is built by Lys-206, Asp-265, Arg-276, and Asn-277. The Proton acceptor role is filled by Lys-206. Arg-276 is a binding site for NADPH. Residues Leu-309 and Glu-311 each coordinate NADPH.

This sequence belongs to the NAD-dependent glycerol-3-phosphate dehydrogenase family.

Its subcellular location is the cytoplasm. The catalysed reaction is sn-glycerol 3-phosphate + NAD(+) = dihydroxyacetone phosphate + NADH + H(+). It carries out the reaction sn-glycerol 3-phosphate + NADP(+) = dihydroxyacetone phosphate + NADPH + H(+). It participates in membrane lipid metabolism; glycerophospholipid metabolism. Catalyzes the reduction of the glycolytic intermediate dihydroxyacetone phosphate (DHAP) to sn-glycerol 3-phosphate (G3P), the key precursor for phospholipid synthesis. The polypeptide is Glycerol-3-phosphate dehydrogenase [NAD(P)+] (Treponema pallidum (strain Nichols)).